We begin with the raw amino-acid sequence, 348 residues long: MGLAELRELIEPEETDLRALAGREIAIDAFNALYQFLTTIMKDGRPLMDSRGRITSHLNGLLYRTVNLVEEGIKPVYVFDGEPPDLKRETLERRRERKEEAMEKLRRAKTKEEREKYARQVARLDESLVEDAKRLLDLMGIPWVQAPSEGEAQCAYMARCGDVWATGSQDYDSLLFGSPRLVRNITIVGKRKHPHTGEIIEVKPEIMRLEDVLDQLGLESREQLVDLAILLGTDYNPDGVPGIGPKRALQLIRKYGSLDELKDTDIWPKIERHLPVEPEKLRRLFLEPEVTDDYELDWDEPDEEGLVEFLVEERDFSEDRVRRAVERLKEALQELRKGGRQETLDAFF.

The segment at 1 to 98 is N-domain; the sequence is MGLAELRELI…ETLERRRERK (98 aa). Mg(2+) contacts are provided by D28, D80, E149, E151, D170, D172, and D234. The segment at 113-256 is I-domain; that stretch reads EREKYARQVA…RALQLIRKYG (144 aa). Residues 340-348 are interaction with PCNA; it reads RQETLDAFF.

This sequence belongs to the XPG/RAD2 endonuclease family. FEN1 subfamily. As to quaternary structure, interacts with PCNA. PCNA stimulates the nuclease activity without altering cleavage specificity. It depends on Mg(2+) as a cofactor.

In terms of biological role, structure-specific nuclease with 5'-flap endonuclease and 5'-3' exonuclease activities involved in DNA replication and repair. During DNA replication, cleaves the 5'-overhanging flap structure that is generated by displacement synthesis when DNA polymerase encounters the 5'-end of a downstream Okazaki fragment. Binds the unpaired 3'-DNA end and kinks the DNA to facilitate 5' cleavage specificity. Cleaves one nucleotide into the double-stranded DNA from the junction in flap DNA, leaving a nick for ligation. Also involved in the base excision repair (BER) pathway. Acts as a genome stabilization factor that prevents flaps from equilibrating into structures that lead to duplications and deletions. Also possesses 5'-3' exonuclease activity on nicked or gapped double-stranded DNA. This is Flap endonuclease 1 from Methanopyrus kandleri (strain AV19 / DSM 6324 / JCM 9639 / NBRC 100938).